Here is a 116-residue protein sequence, read N- to C-terminus: U11-theraphotoxin-Hhn1c (116 aa).

Positions 1–21 are cleaved as a signal peptide; the sequence is MNTVRVTFLLVFVLAVSLGQA. Positions 22–74 are excised as a propeptide; the sequence is DKDENRMEMQEKTEQGKSYLDFAENLLLQKLEELEAKLLEEDSEESRNSRQKR. Residues 61-83 form a disordered region; it reads EEDSEESRNSRQKRCIGEGVPCD. Intrachain disulfides connect cysteine 75–cysteine 90, cysteine 82–cysteine 95, and cysteine 89–cysteine 110.

This sequence belongs to the neurotoxin 14 (magi-1) family. 01 (HNTX-16) subfamily. As to expression, expressed by the venom gland.

It localises to the secreted. Probable ion channel inhibitor. This chain is U11-theraphotoxin-Hhn1c, found in Cyriopagopus hainanus (Chinese bird spider).